Here is a 375-residue protein sequence, read N- to C-terminus: Succinyl-diaminopimelate desuccinylase (375 aa).

Residue histidine 66 coordinates Zn(2+). Aspartate 68 is an active-site residue. Aspartate 99 is a binding site for Zn(2+). Glutamate 133 acts as the Proton acceptor in catalysis. Positions 134, 162, and 348 each coordinate Zn(2+).

It belongs to the peptidase M20A family. DapE subfamily. Homodimer. Zn(2+) serves as cofactor. Co(2+) is required as a cofactor.

It carries out the reaction N-succinyl-(2S,6S)-2,6-diaminopimelate + H2O = (2S,6S)-2,6-diaminopimelate + succinate. Its pathway is amino-acid biosynthesis; L-lysine biosynthesis via DAP pathway; LL-2,6-diaminopimelate from (S)-tetrahydrodipicolinate (succinylase route): step 3/3. Its function is as follows. Catalyzes the hydrolysis of N-succinyl-L,L-diaminopimelic acid (SDAP), forming succinate and LL-2,6-diaminopimelate (DAP), an intermediate involved in the bacterial biosynthesis of lysine and meso-diaminopimelic acid, an essential component of bacterial cell walls. The protein is Succinyl-diaminopimelate desuccinylase of Escherichia coli O157:H7.